Reading from the N-terminus, the 125-residue chain is Inner membrane protein YbjM (125 aa).

Residues 1–6 (MKHKQR) lie on the Cytoplasmic side of the membrane. Residues 7 to 27 (WAGAICCFVLFIVVCLFLATH) traverse the membrane as a helical segment. The Periplasmic portion of the chain corresponds to 28-34 (MKGAFRA). Residues 35-55 (AGHPEIGLLFFILPGAVASFF) form a helical membrane-spanning segment. Residues 56–64 (SQRREVLKP) are Cytoplasmic-facing. The helical transmembrane segment at 65–85 (LFGAMLAAPCSMLIMRLFFSP) threads the bilayer. The Periplasmic portion of the chain corresponds to 86–92 (TRSFWQE). A helical membrane pass occupies residues 93–113 (LAWLLSAVFWCALGALCFLFI). Residues 114-125 (SSLFKPQHRKNQ) are Cytoplasmic-facing.

The protein resides in the cell inner membrane. The polypeptide is Inner membrane protein YbjM (ybjM) (Escherichia coli O157:H7).